The following is a 325-amino-acid chain: MNALTAVQNNAVDSGQDYSGFTLIPSAQSPRLLELTFTEQTTKQFLEQVAEWPVQALEYKSFLRFRVGKILDDLCANQLQPLLLKTLLNRAEGALLINAVGVDDVKQADEMVKLATAVAHLIGRSNFDAMSGQYYARFVVKNVDNSDSYLRQPHRVMELHNDGTYVEEITDYVLMMKIDEQNMQGGNSLLLHLDDWEHLDHYFRHPLARRPMRFAAPPSKNVSKDVFHPVFDVDQQGRPVMRYIDQFVQPKDFEEGVWLSELSDAIETSKGILSVPVPVGKFLLINNLFWLHGRDRFTPHPDLRRELMRQRGYFAYATNHYQTHQ.

His160, Asp162, and His292 together coordinate Fe cation.

Belongs to the glutarate hydroxylase family. Homotetramer. Fe(2+) serves as cofactor.

It carries out the reaction glutarate + 2-oxoglutarate + O2 = (S)-2-hydroxyglutarate + succinate + CO2. It functions in the pathway amino-acid degradation. Functionally, acts as an alpha-ketoglutarate-dependent dioxygenase catalyzing hydroxylation of glutarate (GA) to L-2-hydroxyglutarate (L2HG). Functions in a L-lysine degradation pathway that proceeds via cadaverine, glutarate and L-2-hydroxyglutarate. This Escherichia coli O7:K1 (strain IAI39 / ExPEC) protein is Glutarate 2-hydroxylase.